The primary structure comprises 262 residues: Acyl-[acyl-carrier-protein]--UDP-N-acetylglucosamine O-acyltransferase (262 aa).

The protein belongs to the transferase hexapeptide repeat family. LpxA subfamily. Homotrimer.

It localises to the cytoplasm. It carries out the reaction a (3R)-hydroxyacyl-[ACP] + UDP-N-acetyl-alpha-D-glucosamine = a UDP-3-O-[(3R)-3-hydroxyacyl]-N-acetyl-alpha-D-glucosamine + holo-[ACP]. Its pathway is glycolipid biosynthesis; lipid IV(A) biosynthesis; lipid IV(A) from (3R)-3-hydroxytetradecanoyl-[acyl-carrier-protein] and UDP-N-acetyl-alpha-D-glucosamine: step 1/6. Involved in the biosynthesis of lipid A, a phosphorylated glycolipid that anchors the lipopolysaccharide to the outer membrane of the cell. The polypeptide is Acyl-[acyl-carrier-protein]--UDP-N-acetylglucosamine O-acyltransferase (Shigella flexneri serotype 5b (strain 8401)).